The sequence spans 296 residues: Nucleotide-binding protein M6_Spy0559 (296 aa).

13-20 (GMSGAGKT) is an ATP binding site. 63 to 66 (DMRS) is a binding site for GTP.

It belongs to the RapZ-like family.

Its function is as follows. Displays ATPase and GTPase activities. The chain is Nucleotide-binding protein M6_Spy0559 from Streptococcus pyogenes serotype M6 (strain ATCC BAA-946 / MGAS10394).